We begin with the raw amino-acid sequence, 30 residues long: U1-poneritoxin-Ni3d (30 aa).

The protein belongs to the ponericin-G family. As to expression, expressed by the venom gland.

It is found in the secreted. Its function is as follows. Has activity against some Gram-positive bacteria and S.cerevisiae. Has a non-hemolytic activity. The sequence is that of U1-poneritoxin-Ni3d from Neoponera inversa (Ant).